The chain runs to 533 residues: Glucans biosynthesis protein D (533 aa).

The tat-type signal signal peptide spans 1–28; sequence MQRRHFLKNAAAALAALGLPALPPWALA.

The protein belongs to the OpgD/OpgG family. Predicted to be exported by the Tat system. The position of the signal peptide cleavage has not been experimentally proven.

The protein resides in the periplasm. Its pathway is glycan metabolism; osmoregulated periplasmic glucan (OPG) biosynthesis. Functionally, probably involved in the control of the structural glucose backbone of osmoregulated periplasmic glucans (OPGs). This chain is Glucans biosynthesis protein D, found in Xanthomonas campestris pv. campestris (strain 8004).